We begin with the raw amino-acid sequence, 345 residues long: Viral Fc-gamma receptor-like protein UL119 (345 aa).

The first 23 residues, 1–23 (MCSVLAIALVVALLGDMHPGVKS), serve as a signal peptide directing secretion. Positions 23-42 (SSTTSAVTSPSNTTVTSTTS) are disordered. Residues 24–294 (STTSAVTSPS…KSDPLFEDRL (271 aa)) lie on the Virion surface side of the membrane. N-linked (GlcNAc...) asparagine; by host glycosylation is found at N34, N48, N95, N104, N148, N179, N198, N217, N225, N241, N244, and N260. One can recognise an Ig-like V-type domain in the interval 91-190 (QVSLNATCKV…TWDLFTYPIY (100 aa)). A helical membrane pass occupies residues 295–317 (LAYGVLAFLVFMVIILLYVTYML). Over 318-345 (ARRRDWSYKRLEEPVEEKKHPVPYFKQW) the chain is Intravirion.

The protein resides in the virion membrane. Its function is as follows. Serves as a receptor for the Fc part of human IgG. May thus be involved in interfering with host Ig-mediated immune responses. This chain is Viral Fc-gamma receptor-like protein UL119 (UL119/UL118), found in Human cytomegalovirus (strain AD169) (HHV-5).